The following is a 95-amino-acid chain: Sec-independent protein translocase protein TatA (95 aa).

The chain crosses the membrane as a helical span at residues 1–21 (MGSMSVWHWVIVAVVVMLLFG). The segment at 42-95 (GMADDETQPNTATSVPPVGPNDPVRTLPHQGAPGTAPQPPHVQPHVSAGDHKAV) is disordered.

This sequence belongs to the TatA/E family. In terms of assembly, the Tat system comprises two distinct complexes: a TatABC complex, containing multiple copies of TatA, TatB and TatC subunits, and a separate TatA complex, containing only TatA subunits. Substrates initially bind to the TatABC complex, which probably triggers association of the separate TatA complex to form the active translocon.

It localises to the cell inner membrane. Part of the twin-arginine translocation (Tat) system that transports large folded proteins containing a characteristic twin-arginine motif in their signal peptide across membranes. TatA could form the protein-conducting channel of the Tat system. The polypeptide is Sec-independent protein translocase protein TatA (Methylorubrum extorquens (strain CM4 / NCIMB 13688) (Methylobacterium extorquens)).